The sequence spans 598 residues: Elongation factor 4 (598 aa).

Residues 2-184 (KNIRNFSIIA…EIVRCIPPPV (183 aa)) enclose the tr-type G domain. Residues 14–19 (DHGKST) and 131–134 (NKID) contribute to the GTP site.

It belongs to the TRAFAC class translation factor GTPase superfamily. Classic translation factor GTPase family. LepA subfamily.

The protein resides in the cell inner membrane. It carries out the reaction GTP + H2O = GDP + phosphate + H(+). Required for accurate and efficient protein synthesis under certain stress conditions. May act as a fidelity factor of the translation reaction, by catalyzing a one-codon backward translocation of tRNAs on improperly translocated ribosomes. Back-translocation proceeds from a post-translocation (POST) complex to a pre-translocation (PRE) complex, thus giving elongation factor G a second chance to translocate the tRNAs correctly. Binds to ribosomes in a GTP-dependent manner. The sequence is that of Elongation factor 4 from Psychromonas ingrahamii (strain DSM 17664 / CCUG 51855 / 37).